The chain runs to 665 residues: MIERETSNTFHLASKYEPAGDQPAAIAELVDGVKGGEKAQILLGATGTGKTFTISNVIQEVNKPTLVIAHNKTLAGQLYGEFKEFFPDNAVEYFVSYYDYYQPEAYVPSSDTYIEKDSSINDEIDKLRHSATSSLLERNDVIVVASVSCIFGLGDPREYSQQVVSLRVGMEMDRNELLKSLVDIQFERNDIDFQRGRFRVRGDVVEIFPASRDEHALRVEFFGDEIDRIREVDALTGEIVGETEHVAIFPATHFVTNEEHMEHAISQIQEELEARLKVLRSENKLLEAQRLEQRTNYDIEMMREMGYTSGIENYSRHMDGRQEGEPPYTLLDFFPDDFLLVIDESHVTMPQIRGMYNGDRARKQMLVDYGFRLPSALDNRPLRLEEFEQHVNQIVYVSATPGPYEMEQTETVVQQIIRPTGLLDPEVEIRPIMGQIDDLVGEIHERIEKDQRVFVTTLTKKMAEDLTDYFKELGLKVKYLHSDIKTLERTEIIRDLRLGEFDILIGINLLREGIDVPEVSLIAILDADKEGFLRSERSLVQTMGRAARNAEGKVIMYADKITDSMQRAMDETARRRAIQEAYNEEHGIEPKTIIKEIRDLISISKTADKDETVVQLDKSYKDLSRQEKADLLMKLEREMKDAAKALDFETAATLRDTILELKAAK.

In terms of domain architecture, Helicase ATP-binding spans 31–414 (DGVKGGEKAQ…EMEQTETVVQ (384 aa)). Residue 44–51 (GATGTGKT) participates in ATP binding. The Beta-hairpin signature appears at 97–120 (YYDYYQPEAYVPSSDTYIEKDSSI). The Helicase C-terminal domain maps to 435–601 (QIDDLVGEIH…TIIKEIRDLI (167 aa)). Positions 629–664 (ADLLMKLEREMKDAAKALDFETAATLRDTILELKAA) constitute a UVR domain.

Belongs to the UvrB family. As to quaternary structure, forms a heterotetramer with UvrA during the search for lesions. Interacts with UvrC in an incision complex.

The protein localises to the cytoplasm. In terms of biological role, the UvrABC repair system catalyzes the recognition and processing of DNA lesions. A damage recognition complex composed of 2 UvrA and 2 UvrB subunits scans DNA for abnormalities. Upon binding of the UvrA(2)B(2) complex to a putative damaged site, the DNA wraps around one UvrB monomer. DNA wrap is dependent on ATP binding by UvrB and probably causes local melting of the DNA helix, facilitating insertion of UvrB beta-hairpin between the DNA strands. Then UvrB probes one DNA strand for the presence of a lesion. If a lesion is found the UvrA subunits dissociate and the UvrB-DNA preincision complex is formed. This complex is subsequently bound by UvrC and the second UvrB is released. If no lesion is found, the DNA wraps around the other UvrB subunit that will check the other stand for damage. This Enterococcus faecalis (strain ATCC 700802 / V583) protein is UvrABC system protein B.